The sequence spans 169 residues: Lipoprotein signal peptidase (169 aa).

The next 2 membrane-spanning stretches (helical) occupy residues 59 to 79 (PTVL…YVIW) and 84 to 104 (TTLF…NMID). Active-site residues include Asp113 and Asp139. The chain crosses the membrane as a helical span at residues 132–152 (WPIFNIADSAITIGACMLMIF).

This sequence belongs to the peptidase A8 family.

Its subcellular location is the cell inner membrane. The enzyme catalyses Release of signal peptides from bacterial membrane prolipoproteins. Hydrolyzes -Xaa-Yaa-Zaa-|-(S,diacylglyceryl)Cys-, in which Xaa is hydrophobic (preferably Leu), and Yaa (Ala or Ser) and Zaa (Gly or Ala) have small, neutral side chains.. It functions in the pathway protein modification; lipoprotein biosynthesis (signal peptide cleavage). Its function is as follows. This protein specifically catalyzes the removal of signal peptides from prolipoproteins. The sequence is that of Lipoprotein signal peptidase from Pelodictyon phaeoclathratiforme (strain DSM 5477 / BU-1).